Reading from the N-terminus, the 964-residue chain is Phosphoenolpyruvate carboxylase (964 aa).

At Ser-11 the chain carries Phosphoserine. Catalysis depends on residues His-172 and Lys-600.

It belongs to the PEPCase type 1 family. Homotetramer. Mg(2+) serves as cofactor.

It localises to the cytoplasm. It carries out the reaction oxaloacetate + phosphate = phosphoenolpyruvate + hydrogencarbonate. It functions in the pathway photosynthesis; C4 acid pathway. By light-reversible phosphorylation. Its function is as follows. Through the carboxylation of phosphoenolpyruvate (PEP) it forms oxaloacetate, a four-carbon dicarboxylic acid source for the tricarboxylic acid cycle. This is Phosphoenolpyruvate carboxylase (PPC) from Nicotiana tabacum (Common tobacco).